Here is a 493-residue protein sequence, read N- to C-terminus: ATP synthase subunit beta 3 (493 aa).

Residues 113-138 (VPGDNGTPLPPGTPRRPIHRKPPPLA) form a disordered region. Residue 170–177 (GGAGVGKT) coordinates ATP.

The protein belongs to the ATPase alpha/beta chains family. In terms of assembly, F-type ATPases have 2 components, CF(1) - the catalytic core - and CF(0) - the membrane proton channel. CF(1) has five subunits: alpha(3), beta(3), gamma(1), delta(1), epsilon(1). CF(0) has three main subunits: a(1), b(2) and c(9-12). The alpha and beta chains form an alternating ring which encloses part of the gamma chain. CF(1) is attached to CF(0) by a central stalk formed by the gamma and epsilon chains, while a peripheral stalk is formed by the delta and b chains.

Its subcellular location is the cell inner membrane. It carries out the reaction ATP + H2O + 4 H(+)(in) = ADP + phosphate + 5 H(+)(out). Its function is as follows. Produces ATP from ADP in the presence of a proton gradient across the membrane. The catalytic sites are hosted primarily by the beta subunits. The sequence is that of ATP synthase subunit beta 3 from Paraburkholderia xenovorans (strain LB400).